The sequence spans 85 residues: Beta-insect depressant toxin Lqh-dprIT3h (85 aa).

An N-terminal signal peptide occupies residues 1–21 (MKLLLLLTISASMLIEGLVNA). The LCN-type CS-alpha/beta domain occupies 22–82 (DGYIRGGDGC…EWDYETDTCG (61 aa)). Cystine bridges form between C31–C81, C35–C56, C42–C63, and C46–C65. The residue at position 82 (G82) is a Glycine amide.

The protein belongs to the long (4 C-C) scorpion toxin superfamily. Sodium channel inhibitor family. Beta subfamily. In terms of tissue distribution, expressed by the venom gland.

It is found in the secreted. In terms of biological role, depressant insect beta-toxins cause a transient contraction paralysis followed by a slow flaccid paralysis. They bind voltage-independently at site-4 of sodium channels (Nav) and block action potentials, primarily by depolarizing the axonal membrane and suppressing the sodium current. This depressant toxin is active only on insects. It is found in a relatively small amount in the venom. The chain is Beta-insect depressant toxin Lqh-dprIT3h from Leiurus hebraeus (Hebrew deathstalker scorpion).